Here is a 102-residue protein sequence, read N- to C-terminus: Envelope protein US9 (102 aa).

Residues 1–75 (MAGQNTMEGE…KIYHRKKFCY (75 aa)) are Intravirion-facing. The Di-leucine internalization motif signature appears at 14-15 (LL). The tract at residues 41 to 55 (EKCYYSDSENETADE) is acidic. 2 positions are modified to phosphoserine; by host CK2: S46 and S48. Residues 76–96 (ITLIIVFVFAMTGAAFALGYI) form a helical; Signal-anchor for type II membrane protein membrane-spanning segment. The Virion surface segment spans residues 97-102 (TSQFVG).

This sequence belongs to the alphaherpesvirinae envelope protein US9 family. Post-translationally, phosphorylated on serines within the acidic cluster, possibly by host CK2. Phosphorylation determines whether endocytosed viral US9 traffics to the trans-Golgi network or recycles to the cell membrane.

It localises to the virion membrane. The protein localises to the host Golgi apparatus membrane. It is found in the host Golgi apparatus. Its subcellular location is the host trans-Golgi network. The protein resides in the host cell membrane. Functionally, essential for the anterograde spread of the infection throughout the host nervous system. Together with the gE/gI heterodimer, US9 is involved in the sorting and transport of viral structural components toward axon tips. The polypeptide is Envelope protein US9 (Varicella-zoster virus (strain Dumas) (HHV-3)).